A 340-amino-acid chain; its full sequence is MPMNSVLVIGSGFLGGHIIRQLCERENLRIAAFDLFENEKLLHELHGQFTMYTGDLTKQGDIERVFEEFHPRVVIHTASPVHNLARDIYFEVNVDGTANIIKACQKFNVDALVYTSSAGVVFNGADLINVDESQPIPEVHMDAYNESKALAEKQVLEASSESLKTAALRVAGLFGPGDRQLVPGMLSVLKNGQTKFQLGDNLNLFDFTYIENAAYAHLLAMDNLLSSNPTANGQVFFITNGQVIYFWDFARAIWAHAGHVPPYIIKFPRPVGMLLATAAEWVCYFLKKEPGFTRFRVQFSCANRYFNIQKAEDVLKYHPIVDLEEGIRRTLAWMDTEKKH.

Y144 serves as the catalytic Proton acceptor. An NAD(+)-binding site is contributed by K148.

It belongs to the 3-beta-HSD family. As to quaternary structure, heterotetramer of erg25, erg26, erg27 and erg28. Erg28 acts as a scaffold to tether erg27 and other 4,4-demethylation-related enzymes, forming a demethylation enzyme complex, in the endoplasmic reticulum.

It localises to the endoplasmic reticulum membrane. It carries out the reaction 4beta-methylzymosterol-4alpha-carboxylate + NADP(+) = 3-dehydro-4-methylzymosterol + CO2 + NADPH. It functions in the pathway steroid biosynthesis; zymosterol biosynthesis; zymosterol from lanosterol: step 4/6. Its pathway is steroid metabolism; ergosterol biosynthesis. Functionally, sterol-4-alpha-carboxylate 3-dehydrogenase; part of the third module of ergosterol biosynthesis pathway that includes by the late steps of the pathway. Erg26 is a catalytic component of the C-4 demethylation complex that catalyzes the oxidative decarboxylation that results in a reduction of the 3-beta-hydroxy group at the C-3 carbon to an oxo group. The third module or late pathway involves the ergosterol synthesis itself through consecutive reactions that mainly occur in the endoplasmic reticulum (ER) membrane. Firstly, the squalene synthase erg9 catalyzes the condensation of 2 farnesyl pyrophosphate moieties to form squalene, which is the precursor of all steroids. Secondly, squalene is converted into lanosterol by the consecutive action of the squalene epoxidase erg1 and the lanosterol synthase erg7. The lanosterol 14-alpha-demethylase erg11/cyp1 catalyzes C14-demethylation of lanosterol to produce 4,4'-dimethyl cholesta-8,14,24-triene-3-beta-ol. In the next steps, a complex process involving various demethylation, reduction and desaturation reactions catalyzed by the C-14 reductase erg24 and the C-4 demethylation complex erg25-erg26-erg27 leads to the production of zymosterol. Erg28 likely functions in the C-4 demethylation complex reaction by tethering erg26 and Erg27 to the endoplasmic reticulum or to facilitate interaction between these proteins. Then, the sterol 24-C-methyltransferase erg6 catalyzes the methyl transfer from S-adenosyl-methionine to the C-24 of zymosterol to form fecosterol. The C-8 sterol isomerase erg2 catalyzes the reaction which results in unsaturation at C-7 in the B ring of sterols and thus converts fecosterol to episterol. The sterol-C5-desaturases erg31 and erg32 then catalyze the introduction of a C-5 double bond in the B ring to produce 5-dehydroepisterol. The C-22 sterol desaturase erg5 further converts 5-dehydroepisterol into ergosta-5,7,22,24(28)-tetraen-3beta-ol by forming the C-22(23) double bond in the sterol side chain. Finally, ergosta-5,7,22,24(28)-tetraen-3beta-ol is substrate of the C-24(28) sterol reductase erg4 to produce ergosterol. In the genus Schizosaccharomyces, a second route exists between lanosterol and fecosterol, via the methylation of lanosterol to eburicol by erg6, followed by C14-demethylation by erg11/cyp1 and C4-demethylation by the demethylation complex erg25-erg26-erg27. This is Sterol-4-alpha-carboxylate 3-dehydrogenase erg26, decarboxylating from Schizosaccharomyces pombe (strain 972 / ATCC 24843) (Fission yeast).